The sequence spans 112 residues: Larval cuticle protein 3 (112 aa).

The N-terminal stretch at 1-16 (MFKILLVCSLAALVAA) is a signal peptide. Positions 31–92 (PDGFVSKLVL…PQSDLLPTPP (62 aa)) constitute a Chitin-binding type R&amp;R domain.

In terms of biological role, component of the larval cuticle. The polypeptide is Larval cuticle protein 3 (Lcp3) (Drosophila melanogaster (Fruit fly)).